The following is a 147-amino-acid chain: Hemoglobin subunit beta-2 (147 aa).

An N-acetylvaline modification is found at V2. Positions 3 to 147 (HLTDAEKSAV…VATALAHKYH (145 aa)) constitute a Globin domain. Residue K18 is modified to N6-succinyllysine. Y42 carries the phosphotyrosine modification. Residues S45, S51, and S53 each carry the phosphoserine modification. Position 60 is an N6-succinyllysine (K60). Heme b-binding residues include H64 and H93. R105 is modified (asymmetric dimethylarginine). Phosphothreonine is present on T124.

It belongs to the globin family. Heterotetramer of two alpha chains and two beta chains. As to expression, red blood cells.

In terms of biological role, involved in oxygen transport from the lung to the various peripheral tissues. This chain is Hemoglobin subunit beta-2 (Hbb-b2), found in Mus musculus (Mouse).